The chain runs to 59 residues: MAKTIKITQTRSAIGRLPKHKATLLGLGLRRIGHTVEREDTPAVRGMINAVSYMVKVEE.

It belongs to the universal ribosomal protein uL30 family. As to quaternary structure, part of the 50S ribosomal subunit.

The sequence is that of Large ribosomal subunit protein uL30 from Edwardsiella ictaluri (strain 93-146).